Reading from the N-terminus, the 215-residue chain is 3-dehydroquinate dehydratase (215 aa).

3-dehydroquinate contacts are provided by residues 30 to 32 (EVR) and arginine 62. Histidine 114 serves as the catalytic Proton donor/acceptor. Lysine 140 (schiff-base intermediate with substrate) is an active-site residue. 2 residues coordinate 3-dehydroquinate: arginine 178 and glutamine 201.

Belongs to the type-I 3-dehydroquinase family. Homodimer.

The catalysed reaction is 3-dehydroquinate = 3-dehydroshikimate + H2O. It functions in the pathway metabolic intermediate biosynthesis; chorismate biosynthesis; chorismate from D-erythrose 4-phosphate and phosphoenolpyruvate: step 3/7. Its function is as follows. Involved in the third step of the chorismate pathway, which leads to the biosynthesis of aromatic amino acids. Catalyzes the cis-dehydration of 3-dehydroquinate (DHQ) and introduces the first double bond of the aromatic ring to yield 3-dehydroshikimate. The chain is 3-dehydroquinate dehydratase from Methanopyrus kandleri (strain AV19 / DSM 6324 / JCM 9639 / NBRC 100938).